Consider the following 2153-residue polypeptide: RNA-directed RNA polymerase L (2153 aa).

The Mn(2+) site is built by histidine 36, glutamate 54, aspartate 97, glutamate 110, and valine 111. The For endonuclease activity role is filled by lysine 124. The 187-residue stretch at 957-1143 folds into the RdRp catalytic domain; that stretch reads TGNVIKFKRR…AVNQEMWKSM (187 aa). Mg(2+) is bound at residue aspartate 1100. Positions 1291–2153 are interaction with the viral nucleoprotein; sequence KQAFYSYKHT…FPHDPVSSFY (863 aa).

Belongs to the Bunyavirales RNA polymerase family. As to quaternary structure, interacts with the viral nucleoprotein; this interaction is required for RdRp function. Mn(2+) serves as cofactor. Requires Mg(2+) as cofactor.

The protein resides in the host cytoplasm. It is found in the host perinuclear region. It catalyses the reaction RNA(n) + a ribonucleoside 5'-triphosphate = RNA(n+1) + diphosphate. In terms of biological role, RNA-dependent RNA polymerase, which is responsible for the replication and transcription of the viral RNA genome using antigenomic RNA as an intermediate. During transcription, synthesizes subgenomic RNAs and assures their capping by a cap-snatching mechanism, which involves the endonuclease activity cleaving the host capped pre-mRNAs. These short capped RNAs are then used as primers for viral transcription. Cleaves ssRNA substrates but not DNA. Seems to downregulate the expression of its own and heterologous mRNAs through its endonuclease activity. The sequence is that of RNA-directed RNA polymerase L from Sin Nombre orthohantavirus (SNV).